We begin with the raw amino-acid sequence, 426 residues long: Isocitrate dehydrogenase [NADP] (426 aa).

D-threo-isocitrate is bound by residues serine 123, asparagine 125, arginine 129, arginine 139, and arginine 162. Aspartate 312 lines the Mg(2+) pocket. NADP(+) contacts are provided by residues 344–350 (HGTAWDI), asparagine 357, and lysine 404.

Belongs to the isocitrate and isopropylmalate dehydrogenases family. Homodimer. Mg(2+) serves as cofactor. Mn(2+) is required as a cofactor.

It carries out the reaction D-threo-isocitrate + NADP(+) = 2-oxoglutarate + CO2 + NADPH. Its function is as follows. Catalyzes the oxidative decarboxylation of isocitrate to 2-oxoglutarate and carbon dioxide with the concomitant reduction of NADP(+). This is Isocitrate dehydrogenase [NADP] (icd) from Aquifex aeolicus (strain VF5).